A 249-amino-acid polypeptide reads, in one-letter code: Hydroxyacylglutathione hydrolase (249 aa).

Histidine 54, histidine 56, aspartate 58, histidine 59, histidine 113, aspartate 138, and histidine 176 together coordinate Zn(2+).

The protein belongs to the metallo-beta-lactamase superfamily. Glyoxalase II family. In terms of assembly, monomer. The cofactor is Zn(2+).

The enzyme catalyses an S-(2-hydroxyacyl)glutathione + H2O = a 2-hydroxy carboxylate + glutathione + H(+). Its pathway is secondary metabolite metabolism; methylglyoxal degradation; (R)-lactate from methylglyoxal: step 2/2. Thiolesterase that catalyzes the hydrolysis of S-D-lactoyl-glutathione to form glutathione and D-lactic acid. The chain is Hydroxyacylglutathione hydrolase from Synechococcus sp. (strain CC9605).